Reading from the N-terminus, the 499-residue chain is Putative sodium-dependent excitatory amino acid transporter glt-4 (499 aa).

Topologically, residues 1-7 are cytoplasmic; it reads MAKLSKE. Transmembrane regions (helical) follow at residues 8–28, 50–70, and 87–107; these read NLLLLFTVLGVVVGIGLGFSL, FVQMLKMLILPMIMSSIITSL, and IYYTLTTFFAVFLGIVLVSVI. Residue N165 is glycosylated (N-linked (GlcNAc...) asparagine). 3 helical membrane-spanning segments follow: residues 194–217, 227–254, and 276–297; these read VSDGMNILGLVVFSVALGIVIGVI, FFKSLEACSMKLIGWVIIYSPVGITFLI, and ITVILGLLIHAFVVIPLLCVVL. Residues 303-333 constitute an intramembrane region (discontinuously helical); that stretch reads IKFVGGMAQALLTALATSSSSATLPLSIKCC. Residue 320-322 coordinates L-aspartate; it reads SSS. Residues 343 to 369 traverse the membrane as a helical segment; it reads VTRFVLPLGATINMDGTALYEAVAAIY. Na(+) contacts are provided by G351, T353, and N355. L-aspartate is bound by residues T359, 400-404, D433, and N440; that span reads IPQAG. The discontinuously helical intramembrane region spans 383–416; the sequence is VVLVSLTATLASIGAAGIPQAGIVTMIMVLIAIG. A helical transmembrane segment spans residues 430–451; sequence FMLDRLRTTVNVHGDSIATAVI. Na(+) contacts are provided by N440 and D444.

The protein belongs to the dicarboxylate/amino acid:cation symporter (DAACS) (TC 2.A.23) family.

Its subcellular location is the cell membrane. In terms of biological role, sodium-dependent, high-affinity amino acid transporter that mediates the uptake of L-glutamate and also L-aspartate and D-aspartate. Functions as a symporter that transports one amino acid molecule together with two or three Na(+) ions and one proton, in parallel with the counter-transport of one K(+) ion. Mediates Cl(-) flux that is not coupled to amino acid transport; this avoids the accumulation of negative charges due to aspartate and Na(+) symport. The chain is Putative sodium-dependent excitatory amino acid transporter glt-4 (glt-4) from Caenorhabditis elegans.